A 505-amino-acid polypeptide reads, in one-letter code: MDKFQIDKNKHRPWQQCFLYPVLFQEDLYAIAHDNDLDKSSFSEPLENFLSKEFSFLTVKRLIRRIRQQNNSIVLSGNCDPNEMINRNQNSYSELILESLAVVSEVSFSMRSKPFLEGINEWKSFRSIHCLFPFMEDKLPHTNYISDIRIPYSIHPEILVRTFRRWMRDVPSLHLLRSILHEWRDSSSTENLQKALVVSGEKTKFSLFLWNSYVYEWESILIPLLKRSSHSRSLLSGFFPDRTLFDQKIKHIVVFPHQISTKRIWLLKDPFIHYLRYEERSLLVLKGTQLQVKKCRYHLFKFWQCSFHLWAQPYRIWIHELSKNCSSFLGYFLSVKMKPLVVRAKMLDRLFINDLITNELRPIAPISSIIRFFAKERFCVISGRPISKLAWTSLTDDDILDRFDRIWRNLFHHYSGSFNQEGLYYIKYILLLSCAKTLACKHKSTIRVVREELGSELFTKSFSKKREFISSSFSKTSSQRELNWNGDILQINPLANSWQKIQNKK.

This sequence belongs to the intron maturase 2 family. MatK subfamily.

Its subcellular location is the plastid. It localises to the chloroplast. Its function is as follows. Usually encoded in the trnK tRNA gene intron. Probably assists in splicing its own and other chloroplast group II introns. In Sciadopitys verticillata (Japanese umbrella-pine), this protein is Maturase K.